A 195-amino-acid polypeptide reads, in one-letter code: Imidazoleglycerol-phosphate dehydratase (195 aa).

It belongs to the imidazoleglycerol-phosphate dehydratase family.

It is found in the cytoplasm. It catalyses the reaction D-erythro-1-(imidazol-4-yl)glycerol 3-phosphate = 3-(imidazol-4-yl)-2-oxopropyl phosphate + H2O. It functions in the pathway amino-acid biosynthesis; L-histidine biosynthesis; L-histidine from 5-phospho-alpha-D-ribose 1-diphosphate: step 6/9. The sequence is that of Imidazoleglycerol-phosphate dehydratase from Koribacter versatilis (strain Ellin345).